The primary structure comprises 86 residues: Large ribosomal subunit protein bL31B (86 aa).

It belongs to the bacterial ribosomal protein bL31 family. Type B subfamily. In terms of assembly, part of the 50S ribosomal subunit.

This is Large ribosomal subunit protein bL31B from Vibrio campbellii (strain ATCC BAA-1116).